The chain runs to 1057 residues: Nuclear RNAi defective-3 protein (1057 aa).

Disordered stretches follow at residues 1-89 and 344-388; these read MDLL…GLSV and LTNS…ERTV. Low complexity predominate over residues 17 to 30; the sequence is STAKKPATSASSTP. 2 stretches are compositionally biased toward basic and acidic residues: residues 67 to 81 and 356 to 388; these read PKRE…DPKR and GGRE…ERTV. In terms of domain architecture, PAZ spans 387 to 500; sequence TVSHYQRQFQ…YPMELMSILP (114 aa). Residues 677–1001 form the Piwi domain; sequence GIIAEKRPDM…LAKRGHNNYK (325 aa).

Its subcellular location is the cytoplasm. It is found in the nucleus. Transports small interfering RNAs (siRNAs) from the cytoplasm to the nucleus. Required for RNA interference (RNAi) in nuclei. Required for exogenous RNAi-induced H3K27 methylation. In Caenorhabditis elegans, this protein is Nuclear RNAi defective-3 protein (nrde-3).